We begin with the raw amino-acid sequence, 794 residues long: Phenylalanine--tRNA ligase beta subunit (794 aa).

Residues 40 to 158 (NSLNSELILG…LKKYIGSDVK (119 aa)) enclose the tRNA-binding domain. The 76-residue stretch at 402-477 (KNKQSLEIKL…RLYSYDKIDE (76 aa)) folds into the B5 domain. Mg(2+)-binding residues include Asp455, Asp461, Glu464, and Glu465. Residues 702–794 (SKFQSSSRDL…NIKQMKVVIR (93 aa)) enclose the FDX-ACB domain.

The protein belongs to the phenylalanyl-tRNA synthetase beta subunit family. Type 1 subfamily. As to quaternary structure, tetramer of two alpha and two beta subunits. The cofactor is Mg(2+).

The protein localises to the cytoplasm. The catalysed reaction is tRNA(Phe) + L-phenylalanine + ATP = L-phenylalanyl-tRNA(Phe) + AMP + diphosphate + H(+). The protein is Phenylalanine--tRNA ligase beta subunit of Mycoplasma mycoides subsp. mycoides SC (strain CCUG 32753 / NCTC 10114 / PG1).